A 199-amino-acid chain; its full sequence is Ribonuclease HII (199 aa).

The RNase H type-2 domain occupies Gly13 to Gly199. A divalent metal cation is bound by residues Asp19, Glu20, and Asp110.

This sequence belongs to the RNase HII family. Requires Mn(2+) as cofactor. It depends on Mg(2+) as a cofactor.

The protein resides in the cytoplasm. It carries out the reaction Endonucleolytic cleavage to 5'-phosphomonoester.. Functionally, endonuclease that specifically degrades the RNA of RNA-DNA hybrids. This Jannaschia sp. (strain CCS1) protein is Ribonuclease HII.